The primary structure comprises 147 residues: MLIPKENRKAIHQALFQQGVLVAKKDFNLPKHPEVGVPNLQVIKACQSLDSRGYLKTRYNWGWFYYTLTNEGVEYLREYLHLPAEVVPATHKRQVRPAAPRAGRPEPRERSSAADAGYRRAEKKDDGAAPGGFAPSFRGGFGRPVAA.

The segment at 90–147 (THKRQVRPAAPRAGRPEPRERSSAADAGYRRAEKKDDGAAPGGFAPSFRGGFGRPVAA) is disordered. The span at 103 to 127 (GRPEPRERSSAADAGYRRAEKKDDG) shows a compositional bias: basic and acidic residues.

It belongs to the eukaryotic ribosomal protein eS10 family. As to quaternary structure, component of the small ribosomal subunit (SSU). Mature yeast ribosomes consist of a small (40S) and a large (60S) subunit. The 40S small subunit contains 1 molecule of ribosomal RNA (18S rRNA) and at least 33 different proteins. The large 60S subunit contains 3 rRNA molecules (25S, 5.8S and 5S rRNA) and at least 46 different proteins. eS10 interacts with GCN1 (via middle region); this interaction is direct and promotes GCN2 kinase activity.

Its subcellular location is the cytoplasm. In terms of biological role, component of the ribosome, a large ribonucleoprotein complex responsible for the synthesis of proteins in the cell. The small ribosomal subunit (SSU) binds messenger RNAs (mRNAs) and translates the encoded message by selecting cognate aminoacyl-transfer RNA (tRNA) molecules. The large subunit (LSU) contains the ribosomal catalytic site termed the peptidyl transferase center (PTC), which catalyzes the formation of peptide bonds, thereby polymerizing the amino acids delivered by tRNAs into a polypeptide chain. The nascent polypeptides leave the ribosome through a tunnel in the LSU and interact with protein factors that function in enzymatic processing, targeting, and the membrane insertion of nascent chains at the exit of the ribosomal tunnel. eS10 plays a role as a positive regulator of the GCN2 kinase activity by stimulating GCN1-mediated GCN2 activation. This is Small ribosomal subunit protein eS10B (rps1002) from Schizosaccharomyces pombe (strain 972 / ATCC 24843) (Fission yeast).